The primary structure comprises 165 residues: ATP synthase subunit b (165 aa).

The helical transmembrane segment at 7-27 (STTIGDIIIVSGSVLLLFILI) threads the bilayer.

Belongs to the ATPase B chain family. F-type ATPases have 2 components, F(1) - the catalytic core - and F(0) - the membrane proton channel. F(1) has five subunits: alpha(3), beta(3), gamma(1), delta(1), epsilon(1). F(0) has three main subunits: a(1), b(2) and c(10-14). The alpha and beta chains form an alternating ring which encloses part of the gamma chain. F(1) is attached to F(0) by a central stalk formed by the gamma and epsilon chains, while a peripheral stalk is formed by the delta and b chains.

It localises to the cell membrane. Functionally, f(1)F(0) ATP synthase produces ATP from ADP in the presence of a proton or sodium gradient. F-type ATPases consist of two structural domains, F(1) containing the extramembraneous catalytic core and F(0) containing the membrane proton channel, linked together by a central stalk and a peripheral stalk. During catalysis, ATP synthesis in the catalytic domain of F(1) is coupled via a rotary mechanism of the central stalk subunits to proton translocation. Component of the F(0) channel, it forms part of the peripheral stalk, linking F(1) to F(0). In Streptococcus agalactiae serotype Ia (strain ATCC 27591 / A909 / CDC SS700), this protein is ATP synthase subunit b.